The sequence spans 264 residues: tRNA pseudouridine synthase A (264 aa).

Asp51 acts as the Nucleophile in catalysis. Tyr109 is a binding site for substrate.

This sequence belongs to the tRNA pseudouridine synthase TruA family. In terms of assembly, homodimer.

The enzyme catalyses uridine(38/39/40) in tRNA = pseudouridine(38/39/40) in tRNA. Functionally, formation of pseudouridine at positions 38, 39 and 40 in the anticodon stem and loop of transfer RNAs. In Actinobacillus succinogenes (strain ATCC 55618 / DSM 22257 / CCUG 43843 / 130Z), this protein is tRNA pseudouridine synthase A.